Consider the following 400-residue polypeptide: Putative C-type lectin domain family 20 member A (400 aa).

An N-terminal signal peptide occupies residues 1-20; it reads MLPRALLLSFCAAALQLVSS. C-type lectin domains are found at residues 26–131 and 159–275; these read LVKE…FLCY and ISGQ…FFCF. Cystine bridges form between C40/C130, C105/C122, C180/C274, and C248/C266. Residues 287–346 form a disordered region; it reads ELPPLFHTSPTEMTEETTPRPGRAVASVGSGTDRRDTAAATEAQHLSSESKEKTSAQKSG.

This chain is Putative C-type lectin domain family 20 member A, found in Homo sapiens (Human).